The primary structure comprises 99 residues: Small ribosomal subunit protein uS14m (99 aa).

Belongs to the universal ribosomal protein uS14 family.

It localises to the mitochondrion. This Marchantia polymorpha (Common liverwort) protein is Small ribosomal subunit protein uS14m (RPS14).